The primary structure comprises 500 residues: DNA double-strand break repair helicase HerA (500 aa).

Residues R142, G151–N156, and K459–I460 each bind ATP.

It belongs to the HerA family. Homohexamer. Forms a complex with NurA.

The enzyme catalyses Couples ATP hydrolysis with the unwinding of duplex DNA at the replication fork by translocating in the 5'-3' direction. This creates two antiparallel DNA single strands (ssDNA). The leading ssDNA polymer is the template for DNA polymerase III holoenzyme which synthesizes a continuous strand.. The catalysed reaction is ATP + H2O = ADP + phosphate + H(+). It catalyses the reaction Couples ATP hydrolysis with the unwinding of duplex DNA by translocating in the 3'-5' direction.. ATPase activity is stimulated in the presence of linear double-stranded (ds)DNA. Helicase activity requires the presence of NurA. LhrC-Core (Hel112) inhibits the exonuclease activity of the HerA-NurA complex on ss- and dsDNA, has no effect on the nicking activity of NurA. Functionally, involved in DNA double-strand break (DSB) repair. Probably acts with NurA to stimulate resection of the 5' strand and produce the long 3' single-strand that is required for RadA loading. NurA and HerA together stimulate the end-resection of six nucleotides of a linear DNA substrate. Has DNA-dependent ATPase activity and bidirectional DNA helicase activity. Preferentially binds single stranded (ss)DNA, bubble and semiforked DNA substrate over other DNA molecules tested. Stimulates the exo- but not endonuclease activity of NurA. The sequence is that of DNA double-strand break repair helicase HerA from Saccharolobus solfataricus (strain ATCC 35092 / DSM 1617 / JCM 11322 / P2) (Sulfolobus solfataricus).